We begin with the raw amino-acid sequence, 386 residues long: MLGALLRLLSACGGVWPTSPAPPARSSSSSSAAAAADQAAAEGRDGLLWWRDLARCHAGELSVAVVQGNHVLEDQCRVESGPPPLAATCIGVFDGHAGPDAARFACDHLLPNLREAASGPEGVTADAIRDAFLATEEGFLAVVSRMWEAQPDMATVGTCCLVGVVHQRTLFVANLGDSRAVLGKKVGRAGQITAEQLSSEHNANEEDVRQELMAQHPDDPQIVALKHGVWRVKGIIQVSRSLGDAYLKHSQYNTEQIKPKFRLPEPFSRPILSANPSIIARCLQPSDCFIIFASDGLWEHLSNQQAVEIVHNHQRAGSARRLIKAALHEAARKREMRYSDLMKIDKKVRRHFHDDITVIVLFINYDQLAKGHSQGQSLSIRCALDH.

The region spanning 60 to 363 (ELSVAVVQGN…DDITVIVLFI (304 aa)) is the PPM-type phosphatase domain. Mn(2+) is bound by residues Asp-94, Gly-95, Asp-295, and Asp-354.

Belongs to the PP2C family. Mg(2+) is required as a cofactor. It depends on Mn(2+) as a cofactor.

It catalyses the reaction O-phospho-L-seryl-[protein] + H2O = L-seryl-[protein] + phosphate. It carries out the reaction O-phospho-L-threonyl-[protein] + H2O = L-threonyl-[protein] + phosphate. The chain is Probable protein phosphatase 2C 36 from Oryza sativa subsp. japonica (Rice).